The chain runs to 22 residues: uncharacterized protein (22 aa).

Positions 1–22 are disordered; sequence MHNSIAYDKDGNSTGQKYYAYG.

This is an uncharacterized protein from Lactobacillus helveticus (Lactobacillus suntoryeus).